A 257-amino-acid chain; its full sequence is Beta-fibrinogenase mucrofibrase-4 (257 aa).

Residues 1–18 form the signal peptide; sequence MVLIRVLANLLILQLSYA. Positions 19 to 24 are excised as a propeptide; it reads QKSSEL. The Peptidase S1 domain occupies 25-248; sequence VIGGDECNIN…HLDWIKGFIA (224 aa). Cystine bridges form between Cys31-Cys162, Cys49-Cys65, Cys97-Cys255, Cys141-Cys209, Cys173-Cys188, and Cys199-Cys224. Active-site charge relay system residues include His64 and Asp109. The Charge relay system role is filled by Ser203.

The protein belongs to the peptidase S1 family. Snake venom subfamily. Monomer. Expressed by the venom gland.

The protein resides in the secreted. In terms of biological role, snake venom serine protease with fibrinogenolytic activities. Cleaves beta-chain of fibrinogen (FGB) efficiently and shows relatively lower activity on alpha-chain. The protein is Beta-fibrinogenase mucrofibrase-4 of Protobothrops mucrosquamatus (Taiwan habu).